The following is a 276-amino-acid chain: Lysosome-associated membrane glycoprotein 5 (276 aa).

Residues 1 to 27 (MDYRACTSALRMPVLLLLLCTFSCNLA) form the signal peptide. Topologically, residues 28–231 (EQEVENLSGL…PTDQRKQLEE (204 aa)) are extracellular. N-linked (GlcNAc...) asparagine glycans are attached at residues Asn-33, Asn-51, and Asn-100. A helical transmembrane segment spans residues 232–252 (TLPLILGLTLGVAILIIVAVY). At 253-276 (HIHHKMTANQVQIPRDRSLYKHMG) the chain is on the cytoplasmic side.

The protein belongs to the LAMP family. Glycosylated.

It localises to the cytoplasmic vesicle membrane. The protein localises to the cell membrane. The protein resides in the cell projection. It is found in the dendrite. Its subcellular location is the cytoplasmic vesicle. It localises to the secretory vesicle. The protein localises to the synaptic vesicle membrane. The protein resides in the growth cone membrane. It is found in the early endosome membrane. Its subcellular location is the recycling endosome. It localises to the endoplasmic reticulum-Golgi intermediate compartment membrane. The protein localises to the endosome membrane. Functionally, plays a role in short-term synaptic plasticity in a subset of GABAergic neurons in the brain. This is Lysosome-associated membrane glycoprotein 5 (lamp5) from Xenopus tropicalis (Western clawed frog).